The chain runs to 302 residues: Probable 2-(5''-triphosphoribosyl)-3'-dephosphocoenzyme-A synthase (302 aa).

This sequence belongs to the CitG/MdcB family.

The catalysed reaction is 3'-dephospho-CoA + ATP = 2'-(5''-triphospho-alpha-D-ribosyl)-3'-dephospho-CoA + adenine. This chain is Probable 2-(5''-triphosphoribosyl)-3'-dephosphocoenzyme-A synthase, found in Albidiferax ferrireducens (strain ATCC BAA-621 / DSM 15236 / T118) (Rhodoferax ferrireducens).